A 198-amino-acid polypeptide reads, in one-letter code: tRNA (pseudouridine(54)-N(1))-methyltransferase (198 aa).

Position 128 (Leu128) interacts with S-adenosyl-L-methionine.

The protein belongs to the methyltransferase superfamily. TrmY family. In terms of assembly, homodimer.

Its subcellular location is the cytoplasm. The catalysed reaction is pseudouridine(54) in tRNA + S-adenosyl-L-methionine = N(1)-methylpseudouridine(54) in tRNA + S-adenosyl-L-homocysteine + H(+). Functionally, specifically catalyzes the N1-methylation of pseudouridine at position 54 (Psi54) in tRNAs. The protein is tRNA (pseudouridine(54)-N(1))-methyltransferase of Natronomonas pharaonis (strain ATCC 35678 / DSM 2160 / CIP 103997 / JCM 8858 / NBRC 14720 / NCIMB 2260 / Gabara) (Halobacterium pharaonis).